Consider the following 204-residue polypeptide: Somatotropin (204 aa).

The signal sequence occupies residues Met-1–Ser-17. A Pyrrolidone carboxylic acid modification is found at Gln-18. Zn(2+) is bound at residue His-36. The cysteines at positions 69 and 177 are disulfide-linked. Zn(2+) is bound at residue Glu-186. Cysteines 194 and 202 form a disulfide.

The protein belongs to the somatotropin/prolactin family.

The protein localises to the secreted. In terms of biological role, growth hormone plays an important role in growth control and is involved in the regulation of several anabolic processes. Implicated as an osmoregulatory substance important for seawater adaptation. The sequence is that of Somatotropin (gh) from Lates calcarifer (Barramundi).